The following is a 490-amino-acid chain: GTPase Der (490 aa).

2 EngA-type G domains span residues 3 to 166 (PVVA…AEAM) and 200 to 373 (IKLA…DSAT). Residues 9 to 16 (GRPNVGKS), 56 to 60 (DTGGI), 118 to 121 (NKVD), 206 to 213 (GKPNVGKS), 253 to 257 (DTAGV), and 318 to 321 (NKWD) contribute to the GTP site. One can recognise a KH-like domain in the interval 374-458 (RRVSTSMLTR…PIQLRFQEGG (85 aa)).

The protein belongs to the TRAFAC class TrmE-Era-EngA-EngB-Septin-like GTPase superfamily. EngA (Der) GTPase family. In terms of assembly, associates with the 50S ribosomal subunit.

Functionally, GTPase that plays an essential role in the late steps of ribosome biogenesis. In Shewanella halifaxensis (strain HAW-EB4), this protein is GTPase Der.